The sequence spans 322 residues: Protein-methionine-sulfoxide reductase catalytic subunit MsrP (322 aa).

Positions 1-59 form a signal peptide, tat-type signal; that stretch reads MSFRDALNLPSSEITDESVYRDRRRLLQLLALTPALGVAGCAEADPPPPPKTVVTPAQA. Residues Asn79, 82-83, Cys137, Thr172, Asn220, Arg225, and 236-238 contribute to the Mo-molybdopterin site; these read YE and SIK.

The protein belongs to the MsrP family. Heterodimer of a catalytic subunit (MsrP) and a heme-binding subunit (MsrQ). The cofactor is Mo-molybdopterin. Predicted to be exported by the Tat system. The position of the signal peptide cleavage has not been experimentally proven.

The protein resides in the periplasm. The catalysed reaction is L-methionyl-[protein] + a quinone + H2O = L-methionyl-(S)-S-oxide-[protein] + a quinol. It carries out the reaction L-methionyl-[protein] + a quinone + H2O = L-methionyl-(R)-S-oxide-[protein] + a quinol. Part of the MsrPQ system that repairs oxidized periplasmic proteins containing methionine sulfoxide residues (Met-O), using respiratory chain electrons. Thus protects these proteins from oxidative-stress damage caused by reactive species of oxygen and chlorine generated by the host defense mechanisms. MsrPQ is essential for the maintenance of envelope integrity under bleach stress, rescuing a wide series of structurally unrelated periplasmic proteins from methionine oxidation. The catalytic subunit MsrP is non-stereospecific, being able to reduce both (R-) and (S-) diastereoisomers of methionine sulfoxide. The polypeptide is Protein-methionine-sulfoxide reductase catalytic subunit MsrP (Xanthomonas axonopodis pv. citri (strain 306)).